A 447-amino-acid polypeptide reads, in one-letter code: Dual specificity protein phosphatase CDC14C (447 aa).

Residues 14–168 are a; sequence PQDDVYVDIT…AMQYGFLNFN (155 aa). A linker region spans residues 169-182; it reads SFNLDEYEHYEKAE. The interval 183–349 is b; it reads NGDLNWIIPD…EGDYFRQRLK (167 aa). The 161-residue stretch at 184–344 folds into the Tyrosine-protein phosphatase domain; sequence GDLNWIIPDR…TSLWLEGDYF (161 aa). The active-site Phosphocysteine intermediate is C284. The helical transmembrane segment at 426–446 threads the bilayer; sequence FTLCSVVIWWIVCDYILPILL.

Belongs to the protein-tyrosine phosphatase family. Non-receptor class CDC14 subfamily.

The protein resides in the endoplasmic reticulum membrane. It catalyses the reaction O-phospho-L-tyrosyl-[protein] + H2O = L-tyrosyl-[protein] + phosphate. It carries out the reaction O-phospho-L-seryl-[protein] + H2O = L-seryl-[protein] + phosphate. The enzyme catalyses O-phospho-L-threonyl-[protein] + H2O = L-threonyl-[protein] + phosphate. Dual-specificity phosphatase. Preferentially dephosphorylates proteins modified by proline-directed kinases. The polypeptide is Dual specificity protein phosphatase CDC14C (Homo sapiens (Human)).